The following is a 416-amino-acid chain: Enterobactin exporter EntS (416 aa).

The Cytoplasmic segment spans residues 1 to 21 (MNKQSWLLNLSLLKTHPAFRA). The chain crosses the membrane as a helical span at residues 22-42 (VFLARFISIVSLGLLGVAVPV). Topologically, residues 43–55 (QIQMMTHSTWQVG) are periplasmic. Residues 56 to 76 (LSVTLTGGAMFVGLMVGGVLA) form a helical membrane-spanning segment. Over 77-83 (DRYERKK) the chain is Cytoplasmic. A helical transmembrane segment spans residues 84–104 (VILLARGTCGIGFIGLCLNAL). The Periplasmic segment spans residues 105–109 (LPEPS). A helical membrane pass occupies residues 110–130 (LLAIYLLGLWDGFFASLGVTA). The Cytoplasmic portion of the chain corresponds to 131 to 156 (LLAATPALVGRENLMQAGAITMLTVR). Residues 157–177 (LGSVISPMIGGLLLATGGVAW) form a helical membrane-spanning segment. Residue N178 is a topological domain, periplasmic. Residues 179 to 199 (YGLAAAGTFITLLPLLSLPAL) traverse the membrane as a helical segment. Residues 200-218 (PPPPQPREHPLKSLLAGFR) lie on the Cytoplasmic side of the membrane. Residues 219–239 (FLLASPLVGGIALLGGLLTMA) traverse the membrane as a helical segment. Over 240–256 (SAVRVLYPALADNWQMS) the chain is Periplasmic. Residues 257 to 277 (AAQIGFLYAAIPLGAAIGALT) traverse the membrane as a helical segment. At 278 to 287 (SGKLAHSVRP) the chain is on the cytoplasmic side. The chain crosses the membrane as a helical span at residues 288 to 307 (GLLMLLSTLGAFLAIGLFGL). Residues 308–313 (MPMWIL) lie on the Periplasmic side of the membrane. A helical membrane pass occupies residues 314–336 (GVVCLALFGWLSAVSSLLQYTML). At 337–356 (QTQTPEAMLGRINGLWTAQN) the chain is on the cytoplasmic side. Residues 357–377 (VTGDAIGAALLGGLGAMMTPV) form a helical membrane-spanning segment. Position 378 (A378) is a topological domain, periplasmic. A helical membrane pass occupies residues 379-399 (SASASGFGLLIIGVLLLLVLV). Residues 400–416 (ELRRFRQTPPQVTASGS) lie on the Cytoplasmic side of the membrane.

It belongs to the major facilitator superfamily. EntS (TC 2.A.1.38) family.

The protein localises to the cell inner membrane. Functionally, component of an export pathway for enterobactin. The protein is Enterobactin exporter EntS of Escherichia coli O6:K15:H31 (strain 536 / UPEC).